The following is a 393-amino-acid chain: Thermostable carboxypeptidase 1 (393 aa).

3 residues coordinate Zn(2+): His104, Asp109, and His245. The active-site Proton donor is Tyr302. Glu373 acts as the Nucleophile in catalysis.

It belongs to the peptidase M20 family. Homotetramer. Requires Zn(2+) as cofactor.

In terms of biological role, can release basic, acidic, aromatic, and, to a lesser extent, aliphatic amino acids. In Saccharolobus solfataricus (strain ATCC 35092 / DSM 1617 / JCM 11322 / P2) (Sulfolobus solfataricus), this protein is Thermostable carboxypeptidase 1 (cpsA1).